We begin with the raw amino-acid sequence, 548 residues long: Rop guanine nucleotide exchange factor 1 (548 aa).

Acidic residues predominate over residues 1–12 (MGSLSSEEDDEV). The segment at 1-38 (MGSLSSEEDDEVSSERCGSYSPSADISESESSSSFSCH) is disordered. The segment covering 19–36 (SYSPSADISESESSSSFS) has biased composition (low complexity). Positions 81–462 (DKQPDNDLSE…DAMRRSISVT (382 aa)) constitute a PRONE domain. The tract at residues 458 to 548 (SISVTESLSL…RVTGVTPERD (91 aa)) is involved in auto-inhibition. Phosphoserine is present on residues serine 460 and serine 480.

As to quaternary structure, interacts with ARAC10/ROP11 and FER. Forms a complex with ARAC11/ROP1 and PRK2. Interacts in vitro (via PRONE domain) with PRK1, PRK2, PRK3 and PRK4. The C-terminal region is also important for the interaction with PRK2. Post-translationally, phosphorylated at Ser-460 and Ser-480 by PRK2. As to expression, expressed in roots, cotyledons, leaves, stems, sepals, petals, anthers, pollen grains, stigmas and siliques.

It localises to the cytoplasm. It is found in the cytosol. Its subcellular location is the cell membrane. With respect to regulation, phosphorylation at Ser-460 and Ser-480 by PRK2 releases ROPGEF1 auto-inhibition, thereby activating ROPGEF1, which in turn activates ARAC11/ROP1. Its function is as follows. Guanine-nucleotide exchange factor (GEF) that acts as an activator of Rop (Rho of plants) GTPases by promoting the exchange of GDP for GTP. Acts downstream of PRK2 in the control of polarized pollen tube growth by activating ARAC11/ROP1. In association with ROPGEF4, acts as a specific regulator of ARAC10/ROP11 function in ABA-mediated stomatal closure. May play a role in the Rac/Rop-signaling pathway that controls ROS-mediated root hair development. The polypeptide is Rop guanine nucleotide exchange factor 1 (ROPGEF1) (Arabidopsis thaliana (Mouse-ear cress)).